Here is a 200-residue protein sequence, read N- to C-terminus: Recombination protein RecR (200 aa).

The C4-type zinc finger occupies 60-75; sequence CVYCQALTEDDVCNIC. The Toprim domain maps to 83–177; the sequence is TKLCIIESML…KISRIGFGVP (95 aa).

Belongs to the RecR family.

In terms of biological role, may play a role in DNA repair. It seems to be involved in an RecBC-independent recombinational process of DNA repair. It may act with RecF and RecO. This chain is Recombination protein RecR, found in Francisella tularensis subsp. mediasiatica (strain FSC147).